We begin with the raw amino-acid sequence, 83 residues long: MNDTFYYELKENVSNLKSLSKKLYDYVDTLLTPNLSVDKGILINMLRTFANQVDITYYYFELVETKIDSDDPLSPVISTLREC.

This is an uncharacterized protein from Acidianus bottle-shaped virus (isolate Italy/Pozzuoli) (ABV).